A 289-amino-acid polypeptide reads, in one-letter code: 33 kDa chaperonin (289 aa).

2 disulfides stabilise this stretch: Cys237–Cys239 and Cys270–Cys273.

The protein belongs to the HSP33 family. In terms of processing, under oxidizing conditions two disulfide bonds are formed involving the reactive cysteines. Under reducing conditions zinc is bound to the reactive cysteines and the protein is inactive.

The protein localises to the cytoplasm. In terms of biological role, redox regulated molecular chaperone. Protects both thermally unfolding and oxidatively damaged proteins from irreversible aggregation. Plays an important role in the bacterial defense system toward oxidative stress. This is 33 kDa chaperonin from Oceanobacillus iheyensis (strain DSM 14371 / CIP 107618 / JCM 11309 / KCTC 3954 / HTE831).